The following is a 532-amino-acid chain: CTP synthase (532 aa).

An amidoligase domain region spans residues 1–269 (MNQASTRFIF…DTQILNHFNI (269 aa)). Ser-17 is a CTP binding site. Ser-17 is a binding site for UTP. Residues 18–23 (SLGKGL) and Asp-75 contribute to the ATP site. Mg(2+)-binding residues include Asp-75 and Glu-143. CTP is bound by residues 150–152 (DIE), 190–195 (KTKPTQ), and Lys-226. Residues 190–195 (KTKPTQ) and Lys-226 contribute to the UTP site. In terms of domain architecture, Glutamine amidotransferase type-1 spans 294–532 (NVAIIGKYIK…FISFIKASLD (239 aa)). Gly-355 is a binding site for L-glutamine. Cys-382 (nucleophile; for glutamine hydrolysis) is an active-site residue. Residues 383-386 (MGMQ), Glu-406, and Arg-462 each bind L-glutamine. Catalysis depends on residues His-509 and Glu-511.

This sequence belongs to the CTP synthase family. As to quaternary structure, homotetramer.

The catalysed reaction is UTP + L-glutamine + ATP + H2O = CTP + L-glutamate + ADP + phosphate + 2 H(+). It catalyses the reaction L-glutamine + H2O = L-glutamate + NH4(+). The enzyme catalyses UTP + NH4(+) + ATP = CTP + ADP + phosphate + 2 H(+). It participates in pyrimidine metabolism; CTP biosynthesis via de novo pathway; CTP from UDP: step 2/2. Allosterically activated by GTP, when glutamine is the substrate; GTP has no effect on the reaction when ammonia is the substrate. The allosteric effector GTP functions by stabilizing the protein conformation that binds the tetrahedral intermediate(s) formed during glutamine hydrolysis. Inhibited by the product CTP, via allosteric rather than competitive inhibition. In terms of biological role, catalyzes the ATP-dependent amination of UTP to CTP with either L-glutamine or ammonia as the source of nitrogen. Regulates intracellular CTP levels through interactions with the four ribonucleotide triphosphates. This is CTP synthase from Ehrlichia chaffeensis (strain ATCC CRL-10679 / Arkansas).